The chain runs to 411 residues: Phosphopentomutase (411 aa).

Mn(2+)-binding residues include aspartate 14, aspartate 306, histidine 311, aspartate 347, histidine 348, and histidine 359.

This sequence belongs to the phosphopentomutase family. The cofactor is Mn(2+).

The protein resides in the cytoplasm. It catalyses the reaction 2-deoxy-alpha-D-ribose 1-phosphate = 2-deoxy-D-ribose 5-phosphate. It carries out the reaction alpha-D-ribose 1-phosphate = D-ribose 5-phosphate. It functions in the pathway carbohydrate degradation; 2-deoxy-D-ribose 1-phosphate degradation; D-glyceraldehyde 3-phosphate and acetaldehyde from 2-deoxy-alpha-D-ribose 1-phosphate: step 1/2. In terms of biological role, isomerase that catalyzes the conversion of deoxy-ribose 1-phosphate (dRib-1-P) and ribose 1-phosphate (Rib-1-P) to deoxy-ribose 5-phosphate (dRib-5-P) and ribose 5-phosphate (Rib-5-P), respectively. This Lactococcus lactis subsp. cremoris (strain MG1363) protein is Phosphopentomutase.